Here is a 236-residue protein sequence, read N- to C-terminus: Small ribosomal subunit protein uS2c (236 aa).

It belongs to the universal ribosomal protein uS2 family.

Its subcellular location is the plastid. It is found in the chloroplast. This chain is Small ribosomal subunit protein uS2c (rps2), found in Vitis vinifera (Grape).